We begin with the raw amino-acid sequence, 34 residues long: Unknown protein 5 (34 aa).

The protein is Unknown protein 5 of Pseudotsuga menziesii (Douglas-fir).